Consider the following 764-residue polypeptide: 5-methyltetrahydropteroyltriglutamate--homocysteine methyltransferase (764 aa).

5-methyltetrahydropteroyltri-L-glutamate-binding positions include 16 to 19 and lysine 112; that span reads RELK. L-homocysteine is bound by residues 431-433 and glutamate 484; that span reads IGS. Residues 431–433 and glutamate 484 contribute to the L-methionine site; that span reads IGS. 5-methyltetrahydropteroyltri-L-glutamate contacts are provided by residues 515 to 516 and tryptophan 561; that span reads RC. An L-homocysteine-binding site is contributed by aspartate 599. Aspartate 599 is an L-methionine binding site. Glutamate 605 serves as a coordination point for 5-methyltetrahydropteroyltri-L-glutamate. Residues histidine 641, cysteine 643, and glutamate 665 each coordinate Zn(2+). The active-site Proton donor is the histidine 694. Cysteine 726 contributes to the Zn(2+) binding site.

It belongs to the vitamin-B12 independent methionine synthase family. Zn(2+) is required as a cofactor.

The catalysed reaction is 5-methyltetrahydropteroyltri-L-glutamate + L-homocysteine = tetrahydropteroyltri-L-glutamate + L-methionine. The protein operates within amino-acid biosynthesis; L-methionine biosynthesis via de novo pathway; L-methionine from L-homocysteine (MetE route): step 1/1. Its function is as follows. Catalyzes the transfer of a methyl group from 5-methyltetrahydrofolate to homocysteine resulting in methionine formation. This Paraburkholderia xenovorans (strain LB400) protein is 5-methyltetrahydropteroyltriglutamate--homocysteine methyltransferase.